The sequence spans 358 residues: Gap junction alpha-5 protein (358 aa).

At M1 to T19 the chain is on the cytoplasmic side. A helical transmembrane segment spans residues V20–A40. Topologically, residues A41–R76 are extracellular. A helical transmembrane segment spans residues Y77–M97. Residues H98–E164 are Cytoplasmic-facing. Residues V165 to C185 traverse the membrane as a helical segment. At R186–N205 the chain is on the extracellular side. The chain crosses the membrane as a helical span at residues V206–L226. Residues Y227–V358 lie on the Cytoplasmic side of the membrane. The interval A318–V358 is disordered. A phosphoserine mark is found at S353 and S357.

Belongs to the connexin family. Alpha-type (group II) subfamily. As to quaternary structure, a connexon is composed of a hexamer of connexins.

The protein localises to the cell membrane. The protein resides in the cell junction. It localises to the gap junction. Its function is as follows. One gap junction consists of a cluster of closely packed pairs of transmembrane channels, the connexons, through which materials of low MW diffuse from one cell to a neighboring cell. This chain is Gap junction alpha-5 protein (GJA5), found in Canis lupus familiaris (Dog).